The sequence spans 409 residues: MAREKFERTKPHVNIGTIGHVDHGKTTLTAAITATLATAGGAVAKDYSDIDGAPEERARGITINTAHVEYETADRHYAHVDCPGHADYVKNMITGAAQMDGAILVVSAADGPMPQTREHILLAKQVGVPHIVVFLNKQDQVDDDELLELVELEVRELLSTYDFPGDDIPICPGSALQAIEALSSNPDVKRGDNPWVDKIFALMDAVDAYIPTPERDVEKTFLMAIEDVFSITGRGTVATGRIERGVVKVGDNVEIVGVGDTQTTTITGIEMFQKTLEEGFAGDNVGILLRGVTRENIERGMVLSKPGTITPHTNFESEVYVLTKEEGGRHTPFFTGYRPQFYVRTTDVTGSIEQFTADDGTIVEMVMPGDRIKMTAELIYPVAIEEGMRFAIREGGRTIGAGVVSKIVK.

The region spanning 10–214 (KPHVNIGTIG…AVDAYIPTPE (205 aa)) is the tr-type G domain. The segment at 19–26 (GHVDHGKT) is G1. 19–26 (GHVDHGKT) contributes to the GTP binding site. Residue Thr26 coordinates Mg(2+). Positions 60–64 (GITIN) are G2. The G3 stretch occupies residues 81–84 (DCPG). GTP is bound by residues 81–85 (DCPGH) and 136–139 (NKQD). Residues 136 to 139 (NKQD) form a G4 region. The tract at residues 174 to 176 (SAL) is G5.

Belongs to the TRAFAC class translation factor GTPase superfamily. Classic translation factor GTPase family. EF-Tu/EF-1A subfamily.

The protein localises to the plastid. Its subcellular location is the chloroplast. It catalyses the reaction GTP + H2O = GDP + phosphate + H(+). In terms of biological role, GTP hydrolase that promotes the GTP-dependent binding of aminoacyl-tRNA to the A-site of ribosomes during protein biosynthesis. In Thalassiosira pseudonana (Marine diatom), this protein is Elongation factor Tu, chloroplastic (tufA).